We begin with the raw amino-acid sequence, 149 residues long: Large ribosomal subunit protein bL9 (149 aa).

Belongs to the bacterial ribosomal protein bL9 family.

Binds to the 23S rRNA. This chain is Large ribosomal subunit protein bL9, found in Salinibacter ruber (strain DSM 13855 / M31).